A 385-amino-acid chain; its full sequence is Succinate--CoA ligase [ADP-forming] subunit beta (385 aa).

The ATP-grasp domain occupies 9–244; the sequence is KALFRTFGVP…LDEEDPLEVE (236 aa). Residues K46, 53 to 55, E99, Q102, and E107 each bind ATP; that span reads GRG. The Mg(2+) site is built by N199 and D213. Substrate contacts are provided by residues N264 and 321 to 323; that span reads GIL.

This sequence belongs to the succinate/malate CoA ligase beta subunit family. In terms of assembly, heterotetramer of two alpha and two beta subunits. Requires Mg(2+) as cofactor.

The enzyme catalyses succinate + ATP + CoA = succinyl-CoA + ADP + phosphate. The catalysed reaction is GTP + succinate + CoA = succinyl-CoA + GDP + phosphate. It functions in the pathway carbohydrate metabolism; tricarboxylic acid cycle; succinate from succinyl-CoA (ligase route): step 1/1. In terms of biological role, succinyl-CoA synthetase functions in the citric acid cycle (TCA), coupling the hydrolysis of succinyl-CoA to the synthesis of either ATP or GTP and thus represents the only step of substrate-level phosphorylation in the TCA. The beta subunit provides nucleotide specificity of the enzyme and binds the substrate succinate, while the binding sites for coenzyme A and phosphate are found in the alpha subunit. The sequence is that of Succinate--CoA ligase [ADP-forming] subunit beta from Desulforapulum autotrophicum (strain ATCC 43914 / DSM 3382 / VKM B-1955 / HRM2) (Desulfobacterium autotrophicum).